A 396-amino-acid chain; its full sequence is MSVRLVLAKGREKSLLRRHPWIFSGAVARMEGKASLGETIDIVDHQGKWLARGAYSPASQIRARVWTFDPSESIDIAFFTRRLQQAQKWRDWLAQKDGLNSYRLIAGESDGLPGITIDRFGNFLVLQLLSAGAEYQRAALISALQTLYPECAIYDRSDVAVRKKEGMELTQGPVTGELPPALLPIEEHGMKLLVDIQHGHKTGYYLDQRDSRLATRRYVENKRVLNCFSYTGGFAVSALMGGCSQVVSVDTSQEALDIARQNVELNKLDLSKAEFVRDDVFKLLRTYRDRGEKFDVIVMDPPKFVENKSQLMGACRGYKDINMLAIQLLNEGGVLLTFSCSGLMTSDLFQKIIADAAIDAGRDVQFIEQFRQAADHPVIATYPEGLYLKGFACRVM.

The 80-residue stretch at 2-81 folds into the PUA domain; sequence SVRLVLAKGR…ESIDIAFFTR (80 aa).

Belongs to the methyltransferase superfamily. RlmI family.

It is found in the cytoplasm. The catalysed reaction is cytidine(1962) in 23S rRNA + S-adenosyl-L-methionine = 5-methylcytidine(1962) in 23S rRNA + S-adenosyl-L-homocysteine + H(+). Specifically methylates the cytosine at position 1962 (m5C1962) of 23S rRNA. The polypeptide is Ribosomal RNA large subunit methyltransferase I (Escherichia coli (strain SMS-3-5 / SECEC)).